A 276-amino-acid chain; its full sequence is tRNA dimethylallyltransferase (276 aa).

The tract at residues 9-12 (DSLS) is interaction with substrate tRNA.

This sequence belongs to the IPP transferase family. Monomer. Mg(2+) serves as cofactor.

The enzyme catalyses adenosine(37) in tRNA + dimethylallyl diphosphate = N(6)-dimethylallyladenosine(37) in tRNA + diphosphate. Its function is as follows. Catalyzes the transfer of a dimethylallyl group onto the adenine at position 37 in tRNAs that read codons beginning with uridine, leading to the formation of N6-(dimethylallyl)adenosine (i(6)A). This is tRNA dimethylallyltransferase (miaA) from Helicobacter pylori (strain HPAG1).